A 272-amino-acid chain; its full sequence is MSTPTTPPRDAWARLRALTPARIALGRAGTSLPTASHLEFQLAHAQARDAVHLAFDPAPLQAVLQQRGRRSVLLHSAASDRHLYLQRPDLGRRLSDEAAEQLRGTTAVHGGGADLAVVVADGLSALAVHRHAGAMLEHIDALAAHEGWSLAPVTLIAQGRVAIGDEVGELLQAQAVIVLIGERPGLSSPDSLGLYLTYAPRVGHTDAARNCISNIRGEGLSYAEAGHKLGYLLREAFRRKLSGVQLKDEADRPLLGTDTASQAAPRNFLLPE.

V161, E182, and C211 together coordinate adenosylcob(III)alamin.

It belongs to the EutC family. The basic unit is a heterodimer which dimerizes to form tetramers. The heterotetramers trimerize; 6 large subunits form a core ring with 6 small subunits projecting outwards. It depends on adenosylcob(III)alamin as a cofactor.

It is found in the bacterial microcompartment. It catalyses the reaction ethanolamine = acetaldehyde + NH4(+). It functions in the pathway amine and polyamine degradation; ethanolamine degradation. Functionally, catalyzes the deamination of various vicinal amino-alcohols to oxo compounds. Allows this organism to utilize ethanolamine as the sole source of nitrogen and carbon in the presence of external vitamin B12. This chain is Ethanolamine ammonia-lyase small subunit, found in Xanthomonas campestris pv. campestris (strain B100).